The sequence spans 366 residues: Peptide chain release factor 2 (366 aa).

Position 251 is an N5-methylglutamine (Q251).

Belongs to the prokaryotic/mitochondrial release factor family. In terms of processing, methylated by PrmC. Methylation increases the termination efficiency of RF2.

The protein resides in the cytoplasm. Peptide chain release factor 2 directs the termination of translation in response to the peptide chain termination codons UGA and UAA. The polypeptide is Peptide chain release factor 2 (Exiguobacterium sp. (strain ATCC BAA-1283 / AT1b)).